The primary structure comprises 516 residues: MTALDTDTPTAGRSAPLISPGPVIPPPDFGPLDRAQGWAMTAIITALAAITRFLNLGSPTDAGTPIFDEKHYAPQAWQVLHNDGVEDNPGYGLVVHPPVGKQLIAIGEWLFGYNGLGWRFSGAVCGVIIVMLVTRIARRISRSTLVGAIAGLLIIADGVSFVSSRTALLDVFLVMFAVAAFACLMVDRDQVRERMYHAFLDGRIAETRWGTRLGVRWWRFGAGVLLGLACATKWSGLYFVLFFGVMTLVFDAIARKQYHVPHPWRGMLRRDLGPAAYVFGLIPFAVYLASYAPWFASETAVNRYEVGRSIGPDSILPIPDALRSLWHYTHAAYRFHSNLTNADGNHHPWESKPWTWPMSLRPVLYAIDNQDVPGCGAQSCVKAVMLVGTPAMWFIAVPVLGWALWRTVVRRDWRYGAVLVGYMAGFLPWFADIDRQMYFFYATVMAPFLVLAIALILGDILYKPNQNPERRTLGLLTVCFYVALVITNFAWMYPILTGLPISQTTWNLQIWLPSWR.

9 helical membrane passes run 113 to 133 (YNGLGWRFSGAVCGVIIVMLV), 143 to 163 (STLVGAIAGLLIIADGVSFVS), 166 to 186 (TALLDVFLVMFAVAAFACLMV), 234 to 254 (WSGLYFVLFFGVMTLVFDAIA), 275 to 295 (AAYVFGLIPFAVYLASYAPWF), 384 to 404 (VMLVGTPAMWFIAVPVLGWAL), 413 to 433 (WRYGAVLVGYMAGFLPWFADI), 437 to 457 (MYFFYATVMAPFLVLAIALIL), and 473 to 493 (LGLLTVCFYVALVITNFAWMY).

It belongs to the glycosyltransferase 39 family.

The protein resides in the cell membrane. It functions in the pathway protein modification; protein glycosylation. Protein O-mannosyltransferase that catalyzes the transfer of a single mannose residue from a polyprenol phospho-mannosyl lipidic donor to the hydroxyl group of selected serine and threonine residues in acceptor proteins. The sequence is that of Polyprenol-phosphate-mannose--protein mannosyltransferase from Mycolicibacterium smegmatis (strain ATCC 700084 / mc(2)155) (Mycobacterium smegmatis).